We begin with the raw amino-acid sequence, 161 residues long: Regulator of ribonuclease activity A (161 aa).

The protein belongs to the RraA family. As to quaternary structure, homotrimer. Binds to both RNA-binding sites in the C-terminal region of Rne and to RhlB.

It localises to the cytoplasm. Functionally, globally modulates RNA abundance by binding to RNase E (Rne) and regulating its endonucleolytic activity. Can modulate Rne action in a substrate-dependent manner by altering the composition of the degradosome. Modulates RNA-binding and helicase activities of the degradosome. This is Regulator of ribonuclease activity A from Sodalis glossinidius (strain morsitans).